We begin with the raw amino-acid sequence, 512 residues long: MFLVIGAILASALFVGLLLYHLKFKRLIDLISYMPGPPVLPLVGHGHHFIGKPPHEMVKKIFEFMETYSKDQVLKVWLGPELNVLMGNPKDVEVVLGTLRFNDKAGEYKALEPWLKEGLLVSRGRKWHKRRKIITPAFHFKILDQFVEVFEKGSRDLLRNMEQDRLKHGESGFSLYDWINLCTMDTICETAMGVSINAQSNADSEYVQAVKTISMVLHKRMFNILYRFDLTYMLTPLARAEKKALNVLHQFTEKIIVQRREELIREGSSQESSNDDADVGAKRKMAFLDILLQSTVDERPLSNLDIREEVDTFMFEGHDTTSSALMFFFYNIATHPEAQKKCFEEIRSVVGNDKSTPVSYELLNQLHYVDLCVKETLRMYPSVPLLGRKVLEDCEINGKLIPAGTNIGISPLYLGRREELFSEPNSFKPERFDVVTTAEKLNPYAYIPFSAGPRNCIGQKFAMLEIKAIVANVLRHYEVDFVGDSSEPPVLIAELILRTKEPLMFKVRERVY.

2 residues coordinate heme: glutamate 316 and cysteine 456.

This sequence belongs to the cytochrome P450 family. Heme is required as a cofactor.

It is found in the endoplasmic reticulum membrane. The protein localises to the microsome membrane. Its function is as follows. Involved in the metabolism of insect hormones and in the breakdown of synthetic insecticides. The chain is Cytochrome P450 4d1 (Cyp4d1) from Drosophila melanogaster (Fruit fly).